A 119-amino-acid polypeptide reads, in one-letter code: Large ribosomal subunit protein uL18 (119 aa).

This sequence belongs to the universal ribosomal protein uL18 family. Part of the 50S ribosomal subunit; part of the 5S rRNA/L5/L18/L25 subcomplex. Contacts the 5S and 23S rRNAs.

Its function is as follows. This is one of the proteins that bind and probably mediate the attachment of the 5S RNA into the large ribosomal subunit, where it forms part of the central protuberance. This chain is Large ribosomal subunit protein uL18, found in Staphylococcus aureus (strain bovine RF122 / ET3-1).